The chain runs to 334 residues: Holliday junction branch migration complex subunit RuvB (334 aa).

The tract at residues 4 to 184 (ADRIISPNAT…FGIVQRLEFY (181 aa)) is large ATPase domain (RuvB-L). ATP contacts are provided by residues I23, R24, G65, K68, T69, T70, 131-133 (EDY), R174, Y184, and R221. T69 serves as a coordination point for Mg(2+). The segment at 185-255 (SVEDLRHIVA…VADKALNMLN (71 aa)) is small ATPAse domain (RuvB-S). The tract at residues 258–334 (LHGFDHMDRR…YNHFGLTMPE (77 aa)) is head domain (RuvB-H). DNA-binding residues include R313 and R318.

It belongs to the RuvB family. Homohexamer. Forms an RuvA(8)-RuvB(12)-Holliday junction (HJ) complex. HJ DNA is sandwiched between 2 RuvA tetramers; dsDNA enters through RuvA and exits via RuvB. An RuvB hexamer assembles on each DNA strand where it exits the tetramer. Each RuvB hexamer is contacted by two RuvA subunits (via domain III) on 2 adjacent RuvB subunits; this complex drives branch migration. In the full resolvosome a probable DNA-RuvA(4)-RuvB(12)-RuvC(2) complex forms which resolves the HJ.

The protein localises to the cytoplasm. It carries out the reaction ATP + H2O = ADP + phosphate + H(+). The RuvA-RuvB-RuvC complex processes Holliday junction (HJ) DNA during genetic recombination and DNA repair, while the RuvA-RuvB complex plays an important role in the rescue of blocked DNA replication forks via replication fork reversal (RFR). RuvA specifically binds to HJ cruciform DNA, conferring on it an open structure. The RuvB hexamer acts as an ATP-dependent pump, pulling dsDNA into and through the RuvAB complex. RuvB forms 2 homohexamers on either side of HJ DNA bound by 1 or 2 RuvA tetramers; 4 subunits per hexamer contact DNA at a time. Coordinated motions by a converter formed by DNA-disengaged RuvB subunits stimulates ATP hydrolysis and nucleotide exchange. Immobilization of the converter enables RuvB to convert the ATP-contained energy into a lever motion, pulling 2 nucleotides of DNA out of the RuvA tetramer per ATP hydrolyzed, thus driving DNA branch migration. The RuvB motors rotate together with the DNA substrate, which together with the progressing nucleotide cycle form the mechanistic basis for DNA recombination by continuous HJ branch migration. Branch migration allows RuvC to scan DNA until it finds its consensus sequence, where it cleaves and resolves cruciform DNA. This is Holliday junction branch migration complex subunit RuvB from Hahella chejuensis (strain KCTC 2396).